The sequence spans 844 residues: Penicillin-binding protein 1B (844 aa).

A compositionally biased stretch (basic and acidic residues) spans 1–10 (MAGNDREPIG). Residues 1–60 (MAGNDREPIGRKGKPTRPVKQKVSRRRYEDDDDYDDYDDYEDEEPMPRKGKGKGKGRKPR) form a disordered region. Topologically, residues 1-63 (MAGNDREPIG…GKGRKPRGKR (63 aa)) are cytoplasmic. A compositionally biased stretch (basic residues) spans 11 to 25 (RKGKPTRPVKQKVSR). The span at 30–44 (DDDDYDDYDDYEDEE) shows a compositional bias: acidic residues. The span at 48–60 (RKGKGKGKGRKPR) shows a compositional bias: basic residues. The chain crosses the membrane as a helical; Signal-anchor for type II membrane protein span at residues 64-87 (GWLWLLLKLAIVFAVLIAIYGVYL). Positions 88–250 (DQKIRSRIDG…DGISLYSIGR (163 aa)) are membrane association. The Periplasmic portion of the chain corresponds to 88–844 (DQKIRSRIDG…GWIKDMFGSN (757 aa)). The segment at 109 to 200 (RMVNLEPDMT…QFGFFRLDPR (92 aa)) is uvrB domain 2 homolog. Positions 195–367 (FRLDPRLITM…SIYNPWRNPK (173 aa)) are transglycosylase. The active-site Proton donor; for transglycosylase activity is Glu-233. The tract at residues 444-736 (SVAQDAAEKA…NNQPTKLYGA (293 aa)) is transpeptidase. Ser-510 (acyl-ester intermediate; for transpeptidase activity) is an active-site residue. A compositionally biased stretch (low complexity) spans 793-825 (LCQQSEMQQQPSGNPFDQSSQPQQQPQQQPAQQ). Residues 793 to 835 (LCQQSEMQQQPSGNPFDQSSQPQQQPQQQPAQQEQKDSDGVAG) form a disordered region.

It in the N-terminal section; belongs to the glycosyltransferase 51 family. The protein in the C-terminal section; belongs to the transpeptidase family. As to quaternary structure, forms a trimeric complex with MipA and MltA. Has also been shown to exist as monomer or homodimer; homodimer of Alpha and Gamma isozymes can be found. Interacts with UvrA, FtsL and FtsN.

It localises to the cell inner membrane. It carries out the reaction [GlcNAc-(1-&gt;4)-Mur2Ac(oyl-L-Ala-gamma-D-Glu-L-Lys-D-Ala-D-Ala)](n)-di-trans,octa-cis-undecaprenyl diphosphate + beta-D-GlcNAc-(1-&gt;4)-Mur2Ac(oyl-L-Ala-gamma-D-Glu-L-Lys-D-Ala-D-Ala)-di-trans,octa-cis-undecaprenyl diphosphate = [GlcNAc-(1-&gt;4)-Mur2Ac(oyl-L-Ala-gamma-D-Glu-L-Lys-D-Ala-D-Ala)](n+1)-di-trans,octa-cis-undecaprenyl diphosphate + di-trans,octa-cis-undecaprenyl diphosphate + H(+). The catalysed reaction is Preferential cleavage: (Ac)2-L-Lys-D-Ala-|-D-Ala. Also transpeptidation of peptidyl-alanyl moieties that are N-acyl substituents of D-alanine.. Its pathway is cell wall biogenesis; peptidoglycan biosynthesis. In terms of biological role, cell wall formation. Synthesis of cross-linked peptidoglycan from the lipid intermediates. The enzyme has a penicillin-insensitive transglycosylase N-terminal domain (formation of linear glycan strands) and a penicillin-sensitive transpeptidase C-terminal domain (cross-linking of the peptide subunits). This chain is Penicillin-binding protein 1B (mrcB), found in Escherichia coli (strain K12).